A 253-amino-acid chain; its full sequence is MANLMQRSLPLTTTRTPVLQFLRFRGKINIQRPKEPHYERARVVAVTQPKYPELPKARSCFQTRAERTKEQLENPYNEIIAREVRNWLNHSQLVAIFHLNSITADEIFRVRVQLHKQNLHLKSYGRKIIDQAVTGTPYEAIMPLFHSNHCIVFSPNQQQIGALLKITRRVPQMVLLGGIVEKTLLSRNELMAYAQMPNLQGAQAQLVQTLNLAAGQLVQHLQTHQANLVQVLDVHAKGNGDTNTNTTETADES.

A mitochondrion-targeting transit peptide spans 1–24 (MANLMQRSLPLTTTRTPVLQFLRF).

The protein belongs to the universal ribosomal protein uL10 family. Component of the mitochondrial ribosome large subunit (39S) which comprises a 16S rRNA and about 50 distinct proteins.

The protein resides in the mitochondrion. The chain is Large ribosomal subunit protein uL10m (mRpL10) from Drosophila pseudoobscura pseudoobscura (Fruit fly).